The chain runs to 136 residues: Cytidine deaminase (136 aa).

In terms of domain architecture, CMP/dCMP-type deaminase spans 1 to 128 (MNRQELITEA…ELLPGAFSSE (128 aa)). 42–44 (NIE) contributes to the substrate binding site. Cysteine 53 serves as a coordination point for Zn(2+). Glutamate 55 (proton donor) is an active-site residue. Residues cysteine 86 and cysteine 89 each coordinate Zn(2+).

The protein belongs to the cytidine and deoxycytidylate deaminase family. In terms of assembly, homotetramer. Zn(2+) is required as a cofactor.

The enzyme catalyses cytidine + H2O + H(+) = uridine + NH4(+). The catalysed reaction is 2'-deoxycytidine + H2O + H(+) = 2'-deoxyuridine + NH4(+). This enzyme scavenges exogenous and endogenous cytidine and 2'-deoxycytidine for UMP synthesis. This is Cytidine deaminase (cdd) from Bacillus subtilis (strain 168).